Here is a 782-residue protein sequence, read N- to C-terminus: LINE-1 type transposase domain-containing protein 1 (782 aa).

3 disordered regions span residues 1–30, 90–200, and 338–397; these read MSGV…TATS, QEGD…GGAG, and NKGT…SAEE. 2 stretches are compositionally biased toward basic and acidic residues: residues 11 to 27 and 95 to 107; these read LQKE…ERKT and ISER…KVEE. Position 136 is a phosphoserine (Ser136). Basic and acidic residues-rich tracts occupy residues 143 to 158 and 183 to 194; these read SLER…HGRC and EENRLKAPKESP. Acidic residues predominate over residues 347–396; that stretch reads GEEEEISETQGEETSEGETSELGEEEGSESEEEEESSESEEEEESSESAE. Phosphoserine occurs at positions 407, 409, 442, 478, 490, 559, and 567.

The protein belongs to the transposase 22 family.

In Mus musculus (Mouse), this protein is LINE-1 type transposase domain-containing protein 1 (L1td1).